The primary structure comprises 490 residues: Cis-aconitate decarboxylase (490 aa).

Belongs to the PrpD family. Homodimer.

The protein localises to the mitochondrion. The catalysed reaction is cis-aconitate + H(+) = itaconate + CO2. Its function is as follows. Involved in the production of itaconic acid, a soluble unsaturated dicarboxylic acid mainly produced from sugars. The polypeptide is Cis-aconitate decarboxylase (cad1) (Aspergillus terreus (strain NIH 2624 / FGSC A1156)).